A 264-amino-acid polypeptide reads, in one-letter code: ELL-associated factor 2 (264 aa).

Disordered stretches follow at residues 114–154 and 169–264; these read EGSS…PSSP and MDQL…DSDD. The span at 117-142 shows a compositional bias: polar residues; it reads SKVQSRIEQQQQQIRNSSKTPNNIKN. The segment covering 173–196 has biased composition (low complexity); it reads SSSDSSSDSKSSSSSSSSSENSSS. The segment covering 228–238 has biased composition (basic and acidic residues); it reads VPDKDASHNRS. Over residues 239–264 the composition is skewed to polar residues; the sequence is QENSGHMMNTLRSDLQLSESGSDSDD.

It belongs to the EAF family.

The protein localises to the nucleus speckle. In terms of biological role, may act as a transcriptional transactivator. In Gallus gallus (Chicken), this protein is ELL-associated factor 2 (EAF2).